Consider the following 677-residue polypeptide: Methionine--tRNA ligase (677 aa).

The short motif at 15–25 (PYANGSIHLGH) is the 'HIGH' region element. 4 residues coordinate Zn(2+): C146, C149, C159, and C162. The short motif at 333–337 (KMSKS) is the 'KMSKS' region element. K336 serves as a coordination point for ATP. In terms of domain architecture, tRNA-binding spans 576–677 (DFAKIDLRVA…EGAKPGMRVK (102 aa)).

This sequence belongs to the class-I aminoacyl-tRNA synthetase family. MetG type 1 subfamily. In terms of assembly, homodimer. Zn(2+) is required as a cofactor.

The protein localises to the cytoplasm. The enzyme catalyses tRNA(Met) + L-methionine + ATP = L-methionyl-tRNA(Met) + AMP + diphosphate. Is required not only for elongation of protein synthesis but also for the initiation of all mRNA translation through initiator tRNA(fMet) aminoacylation. The protein is Methionine--tRNA ligase of Aeromonas hydrophila subsp. hydrophila (strain ATCC 7966 / DSM 30187 / BCRC 13018 / CCUG 14551 / JCM 1027 / KCTC 2358 / NCIMB 9240 / NCTC 8049).